The primary structure comprises 262 residues: MKAKTLIDAYEAFCPLDLSMEGDVKGLQMGSLDKDIRKVMITLDIRESTVAEAIKNEVDLIITKHAPIFKPLKDLVSSPQRDILLDLVKHDISVYVSHTNIDIVPGGLNDWFCDLLEIKEATYLSETKEGFGIGRIGTVKEQALEELASKVKRVFDLDTVRLIRYDKENPLISKIAICGGSGGEFYQDAVQKGADVYITGDIYYHTAQEMLTEGLFAVDPGHHIEVLFTEKLKEKLQGWKEENGWDVSIISSKASTNPFSHL.

Positions 65, 102, 222, and 225 each coordinate a divalent metal cation.

This sequence belongs to the GTP cyclohydrolase I type 2/NIF3 family. In terms of assembly, homohexamer.

This Streptococcus pyogenes serotype M3 (strain ATCC BAA-595 / MGAS315) protein is GTP cyclohydrolase 1 type 2 homolog.